A 618-amino-acid polypeptide reads, in one-letter code: 1-deoxy-D-xylulose-5-phosphate synthase (618 aa).

Thiamine diphosphate-binding positions include histidine 75 and 116–118 (GHS). Aspartate 147 contributes to the Mg(2+) binding site. Residues 148–149 (GA), asparagine 176, tyrosine 283, and glutamate 364 each bind thiamine diphosphate. Asparagine 176 lines the Mg(2+) pocket.

Belongs to the transketolase family. DXPS subfamily. As to quaternary structure, homodimer. It depends on Mg(2+) as a cofactor. Requires thiamine diphosphate as cofactor.

The catalysed reaction is D-glyceraldehyde 3-phosphate + pyruvate + H(+) = 1-deoxy-D-xylulose 5-phosphate + CO2. Its pathway is metabolic intermediate biosynthesis; 1-deoxy-D-xylulose 5-phosphate biosynthesis; 1-deoxy-D-xylulose 5-phosphate from D-glyceraldehyde 3-phosphate and pyruvate: step 1/1. In terms of biological role, catalyzes the acyloin condensation reaction between C atoms 2 and 3 of pyruvate and glyceraldehyde 3-phosphate to yield 1-deoxy-D-xylulose-5-phosphate (DXP). The chain is 1-deoxy-D-xylulose-5-phosphate synthase from Thiobacillus denitrificans (strain ATCC 25259 / T1).